The chain runs to 932 residues: Protein hir1 (932 aa).

WD repeat units lie at residues 16 to 55 (GHRL…RENE), 72 to 111 (THTG…PGLG), 132 to 171 (GHDN…RLKR), 174 to 213 (AHQS…IEKT), 222 to 265 (PLST…SEIN), 268 to 316 (GHEG…PLLS), and 320 to 361 (VFQK…DMVS). 2 stretches are compositionally biased toward polar residues: residues 405–426 (STTD…QKTP) and 441–453 (TVDT…SKEQ). 2 disordered regions span residues 405 to 470 (STTD…NEIP) and 498 to 520 (TPST…LPPQ). A compositionally biased stretch (low complexity) spans 498-507 (TPSTSRLAST).

It belongs to the WD repeat HIR1 family. In terms of assembly, interacts with his3 and slm9.

It localises to the cytoplasm. It is found in the nucleus. Probably required for replication-independent chromatin assembly. Required for transcriptional silencing in the outer repeat (otr) centromeric repeats and the Tf2 long terminal repeat retrotransposons. Repressor of histone gene transcription in G1 arrested cells. Required for repression of htb1 gene expression outside of S phase. The polypeptide is Protein hir1 (hip1) (Schizosaccharomyces pombe (strain 972 / ATCC 24843) (Fission yeast)).